The following is a 540-amino-acid chain: 2,3-bisphosphoglycerate-independent phosphoglycerate mutase (540 aa).

2 residues coordinate Mn(2+): Asp-24 and Ser-74. Ser-74 serves as the catalytic Phosphoserine intermediate. Substrate is bound by residues His-135, 165 to 166, Arg-197, Arg-203, 268 to 271, and Lys-341; these read RD and RPDR. Mn(2+) contacts are provided by Asp-408, His-412, Asp-449, His-450, and His-467.

It belongs to the BPG-independent phosphoglycerate mutase family. Monomer. Mn(2+) serves as cofactor.

It carries out the reaction (2R)-2-phosphoglycerate = (2R)-3-phosphoglycerate. Its pathway is carbohydrate degradation; glycolysis; pyruvate from D-glyceraldehyde 3-phosphate: step 3/5. Catalyzes the interconversion of 2-phosphoglycerate and 3-phosphoglycerate. In Prochlorococcus marinus (strain MIT 9313), this protein is 2,3-bisphosphoglycerate-independent phosphoglycerate mutase.